The following is a 436-amino-acid chain: Deoxyuridine 5'-triphosphate nucleotidohydrolase (436 aa).

Residues 328–330 (RSS) and 431–432 (FG) each bind substrate.

It belongs to the dUTPase family. Requires Mg(2+) as cofactor.

The catalysed reaction is dUTP + H2O = dUMP + diphosphate + H(+). Its function is as follows. Involved in nucleotide metabolism: produces dUMP, the immediate precursor of thymidine nucleotides and decreases the intracellular concentration of dUTP to avoid uracil incorporation into viral DNA. In Gallid herpesvirus 2 (strain Chicken/Md5/ATCC VR-987) (GaHV-2), this protein is Deoxyuridine 5'-triphosphate nucleotidohydrolase.